The sequence spans 66 residues: Phylloseptin-H9 (66 aa).

Residues 1-22 (MAFLKKSLFLVLFLGLVSLSIC) form the signal peptide. A propeptide spanning residues 23–44 (EEEKRETEEEENDQEEDDKSEE) is cleaved from the precursor. The tract at residues 24–44 (EEKRETEEEENDQEEDDKSEE) is disordered. Residues 30 to 41 (EEEENDQEEDDK) show a composition bias toward acidic residues. A Leucine amide modification is found at leucine 65.

In terms of tissue distribution, expressed by the skin glands.

The protein localises to the secreted. Has antimicrobial activity. This chain is Phylloseptin-H9, found in Pithecopus hypochondrialis (Orange-legged leaf frog).